We begin with the raw amino-acid sequence, 360 residues long: Photosystem II protein D1 (360 aa).

Transmembrane regions (helical) follow at residues 30-47 (YVGW…AAAA), 119-134 (HFLI…QWEL), and 143-157 (WICV…AAFA). Chlorophyll a is bound at residue His-119. Residue Tyr-127 participates in pheophytin a binding. [CaMn4O5] cluster-binding residues include Asp-171 and Glu-190. The chain crosses the membrane as a helical span at residues 198–219 (FHMAGVAGMFGGSLFSAMHGSL). Position 199 (His-199) interacts with chlorophyll a. A quinone is bound by residues His-216 and 265-266 (SF). His-216 lines the Fe cation pocket. His-273 is a binding site for Fe cation. The helical transmembrane segment at 275–289 (FLAVFPVVCVWLTSM) threads the bilayer. The [CaMn4O5] cluster site is built by His-333, Glu-334, Asp-343, and Ala-345. The propeptide occupies 346–360 (AAESTTVALTAPAIG).

Belongs to the reaction center PufL/M/PsbA/D family. In terms of assembly, PSII is composed of 1 copy each of membrane proteins PsbA, PsbB, PsbC, PsbD, PsbE, PsbF, PsbH, PsbI, PsbJ, PsbK, PsbL, PsbM, PsbT, PsbX, PsbY, Psb30/Ycf12, peripheral proteins PsbO, CyanoQ (PsbQ), PsbU, PsbV and a large number of cofactors. It forms dimeric complexes. The D1/D2 heterodimer binds P680, chlorophylls that are the primary electron donor of PSII, and subsequent electron acceptors. It shares a non-heme iron and each subunit binds pheophytin, quinone, additional chlorophylls, carotenoids and lipids. D1 provides most of the ligands for the Mn4-Ca-O5 cluster of the oxygen-evolving complex (OEC). There is also a Cl(-1) ion associated with D1 and D2, which is required for oxygen evolution. The PSII complex binds additional chlorophylls, carotenoids and specific lipids. is required as a cofactor. Post-translationally, tyr-162 forms a radical intermediate that is referred to as redox-active TyrZ, YZ or Y-Z. C-terminally processed by CtpA; processing is essential to allow assembly of the oxygen-evolving complex and thus photosynthetic growth.

It is found in the cellular thylakoid membrane. It carries out the reaction 2 a plastoquinone + 4 hnu + 2 H2O = 2 a plastoquinol + O2. Photosystem II (PSII) is a light-driven water:plastoquinone oxidoreductase that uses light energy to abstract electrons from H(2)O, generating O(2) and a proton gradient subsequently used for ATP formation. It consists of a core antenna complex that captures photons, and an electron transfer chain that converts photonic excitation into a charge separation. The D1/D2 (PsbA/PsbD) reaction center heterodimer binds P680, the primary electron donor of PSII as well as several subsequent electron acceptors. This is Photosystem II protein D1 from Prochlorococcus marinus (strain MIT 9515).